Here is a 2215-residue protein sequence, read N- to C-terminus: Sortilin-related receptor (2215 aa).

An N-terminal signal peptide occupies residues 1–28 (MATRSSRRESRLPFLFALVALLPRGALG). A propeptide spans 29 to 81 (GGWTQRLHGGPAPLPQDRGFFVVQGDPRDLRLGTHGDAPGASPAARKPLRTRR) (removed in mature form). The disordered stretch occupies residues 59-84 (RLGTHGDAPGASPAARKPLRTRRSAA). Over 82–2138 (SAALQPQPIQ…IQAARSTDVA (2057 aa)) the chain is Lumenal. N-linked (GlcNAc...) asparagine glycosylation is present at N99. Position 114 is a phosphoserine (S114). The BNR 1 repeat unit spans residues 136–147 (YVSYDYGKSFSK). A glycan (N-linked (GlcNAc...) asparagine) is linked at N158. A BNR 2 repeat occupies 232 to 243 (WKSDDFGQTWIM). N-linked (GlcNAc...) asparagine glycans are attached at residues N367, N368, and N430. BNR repeat units lie at residues 441-452 (VITFDKGGTWEF), 521-532 (YISSSAGARWRE), and 562-573 (KYSTNEGETWKT). N-linked (GlcNAc...) asparagine glycans are attached at residues N616, N674, N818, and N871. LDL-receptor class B repeat units follow at residues 800–843 (NCLY…EPLS), 844–887 (QLLY…VPQE), 888–932 (GVMF…DSQW), 933–972 (IYWT…FKNE), and 973–1013 (IYWD…FYKG). The region spanning 1026–1072 (CSLLCLPKANNSKSCRCPEGVASSVLPSGDLMCDCPQGYQRKNNTCV) is the EGF-like domain. N-linked (GlcNAc...) asparagine glycosylation is found at N1035 and N1068. LDL-receptor class A domains are found at residues 1076-1114 (NTCL…NCPT), 1115-1155 (TVCD…HCEM), 1156-1194 (HQCR…NCTA), 1198-1236 (TCEA…VSCE), 1238-1272 (KCNG…QHCE), 1273-1317 (PFCT…GCSQ), 1323-1361 (KECD…NCEN), 1366-1405 (PNCS…DCGD), and 1417-1455 (STCL…ACPS). Cystine bridges form between C1078–C1090, C1085–C1103, C1097–C1112, C1117–C1131, C1125–C1144, C1138–C1153, C1158–C1170, C1165–C1183, C1177–C1192, C1199–C1211, C1206–C1224, C1218–C1235, C1239–C1249, C1244–C1262, C1256–C1271, C1275–C1289, C1283–C1302, C1296–C1315, C1325–C1337, C1332–C1350, and C1344–C1359. The N-linked (GlcNAc...) asparagine glycan is linked to N1164. The N-linked (GlcNAc...) asparagine glycan is linked to N1191. Residue N1246 is glycosylated (N-linked (GlcNAc...) asparagine). An N-linked (GlcNAc...) asparagine glycan is attached at N1367. 6 disulfides stabilise this stretch: C1368-C1381, C1376-C1394, C1388-C1403, C1419-C1431, C1426-C1444, and C1438-C1453. N-linked (GlcNAc...) asparagine glycosylation occurs at N1458. 2 LDL-receptor class A domains span residues 1469–1508 (GQCD…NCPT) and 1512–1551 (LTCT…ACSD). 6 disulfide bridges follow: C1471–C1484, C1478–C1497, C1491–C1506, C1514–C1527, C1521–C1540, and C1534–C1549. Fibronectin type-III domains follow at residues 1557-1649 (KVQN…TPEG), 1653-1745 (APRN…TIKG), 1747-1846 (VIQA…SPPA), 1844-1928 (PPAP…VVKM), 1935-2030 (PPRH…APDA), and 2031-2119 (LKII…LYDE). N1608, N1706, N1733, N1810, N1855, N1895, N1987, N2011, N2055, N2070, N2077, and N2093 each carry an N-linked (GlcNAc...) asparagine glycan. A helical transmembrane segment spans residues 2139 to 2159 (AVVVPILFLILLSLGVGFAIL). Topologically, residues 2160-2215 (YTKHRRLQSSFSAFANSHYSSRLGSAIFSSGDDLGEDDEDAPMITGFSDDVPMVIA) are cytoplasmic. A Potential nuclear localization signal for the C-terminal fragment generated by PSEN1 motif is present at residues 2162 to 2165 (KHRR). An Endocytosis signal motif is present at residues 2173–2178 (FANSHY). Residues 2191–2215 (DDLGEDDEDAPMITGFSDDVPMVIA) are required for efficient Golgi apparatus - endosome sorting. Residues 2202-2215 (MITGFSDDVPMVIA) form a required for interaction with GGA1 and GGA2 region. S2207 is modified (phosphoserine; by ROCK2). Residues 2209–2213 (DVPMV) carry the DXXLL motif involved in the interaction with GGA1 motif.

The protein belongs to the VPS10-related sortilin family. SORL1 subfamily. After maturation cleavage, interacts (via N-terminus) with its own propeptide; this interaction prevents interaction with other ligands, including CRLF1, GDNF, GFRA1, IL6 and IL6R. Interacts (via N-terminal ectodomain) with APP, forming a 1:1 stoichiometric complex, including with isoforms APP695, APP751 and APP770; this interaction retains APP in the trans-Golgi network and reduces processing into soluble APP-alpha and amyloid-beta peptides. Also interacts with APP C-terminal fragment C99 and with Abeta40. Interacts with beta-secretase BACE1/BACE; this interaction may affect BACE1-binding to APP and hence reduce BACE1-dependent APP cleavage. Interacts with LRPAP1/RAP. Interacts (via C-terminal cytosolic domain) with GGA1 and GGA2 (via N-terminal VHS domain). Interacts with PACS1. May interact (via the N-terminal ectodomain) with the morphogenetic neuropeptide, also called head activator or HA; this interaction is impaired in the presence of propeptide. Interacts with neurotensin/NTS. Interacts (via the N-terminal ectodomain) with PDGFB homodimer. Interacts (via N-terminal ectodomain) with the uPA receptor PLAUR. Interacts with uPA/PLAU and PAI1/SERPINE1, either individually or in complex with each other, leading to endocytosis. Also interacts with PAI1/SERPINE1 in complex with tPA/PLAT. Interacts (via C-terminus) with AP-1 and AP-2 complexes. Interacts with BMPR1A and BMPR1B. Interacts with lipoprotein lipase LPL; this interaction is optimal in slightly acidic conditions. Interacts (via N-terminal ectodomain) with GDNF (via propeptide) and GDNF receptor alpha-1/GFRA1, either individually or in complex with each other. The interaction with GDNF occurs mostly intracellularly. Also interacts with other GDNF receptor alpha family members, including GFRA2, GFRA3 and GFRA4. Interacts with the insulin receptor INSR; this interaction strongly increases the surface exposure of INSR. Interacts (via cytosolic C-terminus) with STK39/SPAK. Interacts (via N-terminal ectodomain) with the heterodimeric complex CRLF1-CLC; within this complex, the interaction is mediated predominantly by the CRLF1 moiety. Interacts with CNTFR, as well as with the tripartite signaling complex formed by CRLF1, CLC and CNTFR. Interacts (via N-terminal ectodomain) with IL6; this interaction leads to IL6 internalization and lysosomal degradation. Binding of SOLRL1 secreted N-terminal ectodomain to IL6 may increase IL6 trans signaling. Interacts with secreted IL6R; this interaction leads to IL6R internalization. Also interacts with transmembrane IL6R; this interaction does not affect subcellular location. Interacts with APOE. Interacts with apolipoprotein E-rich beta-VLDL. Interacts with APOA5; this interaction leads to APOA5 internalization and is abolished by heparin. Interaction with APOA5 results in enhanced binding to chylomicrons. Interacts with ROCK2. Interacts (via cytosolic C-terminus) with PPP3CB/calcineurin A beta. Interacts with NTRK2/TRKB; this interaction facilitates NTRK2 trafficking between synaptic plasma membranes, postsynaptic densities and cell soma, hence positively regulates BDNF signaling. Interacts (via cytosolic C-terminus) with HSPA12A in an ADP-dependent manner; this interaction affects SORL1 internalization and subcellular localization. Interacts (via N-terminal ectodomain) with ERBB2/HER2. Post-translationally, within the Golgi apparatus, the propeptide may be cleaved off by FURIN or a furin-like protease. After cleavage, the propeptide interacts with the mature protein N-terminus, preventing the association with other ligands. At the cell surface, partially subjected to proteolytic shedding that releases the ectodomain in the extracellular milieu. The shedding may be catalyzed by ADAM17/TACE. Following shedding, PSEN1/presenilin-1 cleaves the remaining transmembrane fragment and catalyzes the release of a C-terminal fragment in the cytosol and of a soluble N-terminal beta fragment in the extracellular milieu. The C-terminal cytosolic fragment localizes to the nucleus. In terms of processing, phosphorylation at Ser-2207 facilitates the interaction with GGA1. As to expression, highly expressed in the central nervous system, including in the brain and spinal cord, in neurons, as well as in glial cells (at protein level). In the brain, mainly expressed in the cerebellum, hippocampus, dentate gyrus, hypothalamus, and in the cerebral cortex (at protein level). Also detected in kidney, heart, lung and spleen. In the kidney, expressed in epithelial cells in the thick ascending limb of Henle's loop, the distal convoluted tubule, the connecting tubule and the cortical collecting duct (at protein level). Expressed in skeletal muscle (at protein level). Expressed in adipose tissue, including in brown adipose tissue and subcutaneous white adipose tissue. Expressed in intimal smooth muscle cells (at protein level).

It is found in the golgi apparatus membrane. It localises to the golgi apparatus. The protein localises to the trans-Golgi network membrane. Its subcellular location is the endosome membrane. The protein resides in the early endosome membrane. It is found in the recycling endosome membrane. It localises to the endoplasmic reticulum membrane. The protein localises to the endosome. Its subcellular location is the multivesicular body membrane. The protein resides in the cell membrane. It is found in the cytoplasmic vesicle. It localises to the secretory vesicle membrane. The protein localises to the secreted. Sorting receptor that directs several proteins to their correct location within the cell. Along with AP-1 complex, involved Golgi apparatus - endosome sorting. Sorting receptor for APP, regulating its intracellular trafficking and processing into amyloidogenic-beta peptides. Retains APP in the trans-Golgi network, hence preventing its transit through late endosomes where amyloid beta peptides Abeta40 and Abeta42 are generated. May also sort newly produced amyloid-beta peptides to lysosomes for catabolism. Does not affect APP trafficking from the endoplasmic reticulum to Golgi compartments. Sorting receptor for the BDNF receptor NTRK2/TRKB that facilitates NTRK2 trafficking between synaptic plasma membranes, postsynaptic densities and cell soma, hence positively regulates BDNF signaling by controlling the intracellular location of its receptor. Sorting receptor for GDNF that promotes GDNF regulated, but not constitutive secretion. Sorting receptor for the GDNF-GFRA1 complex, directing it from the cell surface to endosomes. GDNF is then targeted to lysosomes and degraded, while its receptor GFRA1 recycles back to the cell membrane, resulting in a GDNF clearance pathway. The SORL1-GFRA1 complex further targets RET for endocytosis, but not for degradation, affecting GDNF-induced neurotrophic activities. Sorting receptor for ERBB2/HER2. Regulates ERBB2 subcellular distribution by promoting its recycling after internalization from endosomes back to the plasma membrane, hence stimulating phosphoinositide 3-kinase (PI3K)-dependent ERBB2 signaling. Sorting receptor for lipoprotein lipase LPL. Promotes LPL localization to endosomes and later to the lysosomes, leading to degradation of newly synthesized LPL. Potential sorting receptor for APOA5, inducing APOA5 internalization to early endosomes, then to late endosomes, wherefrom a portion is sent to lysosomes and degradation, another portion is sorted to the trans-Golgi network. Sorting receptor for the insulin receptor INSR. Promotes recycling of internalized INSR via the Golgi apparatus back to the cell surface, thereby preventing lysosomal INSR catabolism, increasing INSR cell surface expression and strengthening insulin signal reception in adipose tissue. Does not affect INSR internalization. Plays a role in renal ion homeostasis, controlling the phospho-regulation of SLC12A1/NKCC2 by STK39/SPAK kinase and PPP3CB/calcineurin A beta phosphatase, possibly through intracellular sorting of STK39 and PPP3CB. Stimulates, via the N-terminal ectodomain, the proliferation and migration of smooth muscle cells, possibly by increasing cell surface expression of the urokinase receptor uPAR/PLAUR. This may promote extracellular matrix proteolysis and hence facilitate cell migration. By acting on the migration of intimal smooth muscle cells, may accelerate intimal thickening following vascular injury. Promotes adhesion of monocytes. Stimulates proliferation and migration of monocytes/macrophages. Through its action on intimal smooth muscle cells and macrophages, may accelerate intimal thickening and macrophage foam cell formation in the process of atherosclerosis. Regulates hypoxia-enhanced adhesion of hematopoietic stem and progenitor cells to the bone marrow stromal cells via a PLAUR-mediated pathway. This function is mediated by the N-terminal ectodomain. Metabolic regulator, which functions to maintain the adequate balance between lipid storage and oxidation in response to changing environmental conditions, such as temperature and diet. The N-terminal ectodomain negatively regulates adipose tissue energy expenditure, acting through the inhibition the BMP/Smad pathway. May regulate signaling by the heterodimeric neurotrophic cytokine CLCF1-CRLF1 bound to the CNTFR receptor by promoting the endocytosis of the tripartite complex CLCF1-CRLF1-CNTFR and lysosomal degradation. May regulate IL6 signaling, decreasing cis signaling, possibly by interfering with IL6-binding to membrane-bound IL6R, while up-regulating trans signaling via soluble IL6R. This is Sortilin-related receptor (Sorl1) from Mus musculus (Mouse).